Consider the following 125-residue polypeptide: UPF0102 protein mlr4633 (125 aa).

Belongs to the UPF0102 family.

The sequence is that of UPF0102 protein mlr4633 from Mesorhizobium japonicum (strain LMG 29417 / CECT 9101 / MAFF 303099) (Mesorhizobium loti (strain MAFF 303099)).